A 249-amino-acid polypeptide reads, in one-letter code: uncharacterized protein (249 aa).

11–34 serves as a coordination point for NADP(+); sequence IFGGRSQIGGELARRLAAGATMVL. Ser142 lines the substrate pocket. Tyr155 (proton acceptor) is an active-site residue.

The protein belongs to the short-chain dehydrogenases/reductases (SDR) family.

This is an uncharacterized protein from Mycobacterium tuberculosis (strain ATCC 25618 / H37Rv).